A 130-amino-acid polypeptide reads, in one-letter code: Methylglyoxal synthase (130 aa).

The MGS-like domain maps to 1–130; the sequence is MMTRPRIALI…AELSRVEAQP (130 aa). Substrate contacts are provided by residues His-12, Lys-16, 38 to 41, and 58 to 59; these read TGTT and SG. Asp-64 serves as the catalytic Proton donor/acceptor. His-91 is a binding site for substrate.

Belongs to the methylglyoxal synthase family.

It carries out the reaction dihydroxyacetone phosphate = methylglyoxal + phosphate. In terms of biological role, catalyzes the formation of methylglyoxal from dihydroxyacetone phosphate. The protein is Methylglyoxal synthase of Cupriavidus pinatubonensis (strain JMP 134 / LMG 1197) (Cupriavidus necator (strain JMP 134)).